Here is a 318-residue protein sequence, read N- to C-terminus: Methionyl-tRNA formyltransferase (318 aa).

112–115 (SILP) provides a ligand contact to (6S)-5,6,7,8-tetrahydrofolate.

It belongs to the Fmt family.

It catalyses the reaction L-methionyl-tRNA(fMet) + (6R)-10-formyltetrahydrofolate = N-formyl-L-methionyl-tRNA(fMet) + (6S)-5,6,7,8-tetrahydrofolate + H(+). In terms of biological role, attaches a formyl group to the free amino group of methionyl-tRNA(fMet). The formyl group appears to play a dual role in the initiator identity of N-formylmethionyl-tRNA by promoting its recognition by IF2 and preventing the misappropriation of this tRNA by the elongation apparatus. This Shewanella baltica (strain OS185) protein is Methionyl-tRNA formyltransferase.